The chain runs to 953 residues: Probable LRR receptor-like serine/threonine-protein kinase At1g53420 (953 aa).

Positions 1 to 22 (MSLNRFLFTSFSFFLFFIVHFA) are cleaved as a signal peptide. Residues 23–566 (SSATLPTQEG…SPRNGMSTGT (544 aa)) lie on the Extracellular side of the membrane. 6 LRR repeats span residues 63 to 86 (WSTI…LVGL), 88 to 110 (LLQE…WGVL), 111 to 132 (PLVN…EFGN), 135 to 158 (TLTS…GNLP), 159 to 182 (NIQQ…AKLT), and 183 to 205 (TLRD…IQKW). Residues N100 and N132 are each glycosylated (N-linked (GlcNAc...) asparagine). N-linked (GlcNAc...) asparagine glycans are attached at residues N265, N315, N335, N378, and N423. Residues 567 to 587 (LHTLVVILSIFIVFLVFGTLW) form a helical membrane-spanning segment. At 588 to 953 (KKGYLRSKSQ…SDRSESSADH (366 aa)) the chain is on the cytoplasmic side. Residues 624–901 (FDSANRIGEG…VKMLEGKKMV (278 aa)) enclose the Protein kinase domain. Residues 630–638 (IGEGGFGPV) and K652 each bind ATP. A Phosphotyrosine modification is found at Y697. The active-site Proton acceptor is the D750. Phosphoserine is present on S783. A phosphothreonine mark is found at T784 and T789. Y797 bears the Phosphotyrosine mark.

This sequence belongs to the protein kinase superfamily. Ser/Thr protein kinase family.

The protein localises to the membrane. It catalyses the reaction L-seryl-[protein] + ATP = O-phospho-L-seryl-[protein] + ADP + H(+). It carries out the reaction L-threonyl-[protein] + ATP = O-phospho-L-threonyl-[protein] + ADP + H(+). The protein is Probable LRR receptor-like serine/threonine-protein kinase At1g53420 of Arabidopsis thaliana (Mouse-ear cress).